A 317-amino-acid chain; its full sequence is Transcription factor MYB35 (317 aa).

HTH myb-type domains lie at 9–65 (KSNV…RPDL) and 66–116 (KHDS…KKKL). 2 consecutive DNA-binding regions (H-T-H motif) follow at residues 37 to 61 (WSLIPKKAGLNRCGKSCRLRWTNYL) and 89 to 112 (WSSIARKLPGRTDNDVKNHWNTKL).

As to expression, inflorescences-specific. Accumulates in anthers, especially in tapetum and meiocytes/microsporocytes and microspores during anther development.

It localises to the nucleus. Required for anther development and early tapetal function during microspore maturation. Regulates callose dissolution required for microspores release from the tetrads. The protein is Transcription factor MYB35 of Arabidopsis thaliana (Mouse-ear cress).